A 333-amino-acid polypeptide reads, in one-letter code: tRNA-dihydrouridine(16) synthase (333 aa).

Residues 19 to 21 and Gln80 contribute to the FMN site; that span reads PMQ. Cys110 (proton donor) is an active-site residue. FMN is bound by residues Lys151, 211–213, and 235–236; these read NGD and GR.

Belongs to the Dus family. DusC subfamily. The cofactor is FMN.

The catalysed reaction is 5,6-dihydrouridine(16) in tRNA + NADP(+) = uridine(16) in tRNA + NADPH + H(+). The enzyme catalyses 5,6-dihydrouridine(16) in tRNA + NAD(+) = uridine(16) in tRNA + NADH + H(+). In terms of biological role, catalyzes the synthesis of 5,6-dihydrouridine (D), a modified base found in the D-loop of most tRNAs, via the reduction of the C5-C6 double bond in target uridines. Specifically modifies U16 in tRNAs. This Neisseria meningitidis serogroup A / serotype 4A (strain DSM 15465 / Z2491) protein is tRNA-dihydrouridine(16) synthase.